We begin with the raw amino-acid sequence, 156 residues long: Cyclic pyranopterin monophosphate synthase (156 aa).

Substrate contacts are provided by residues 73–75 (LCH) and 110–111 (ME). Residue D125 is part of the active site.

Belongs to the MoaC family. As to quaternary structure, homohexamer; trimer of dimers.

It carries out the reaction (8S)-3',8-cyclo-7,8-dihydroguanosine 5'-triphosphate = cyclic pyranopterin phosphate + diphosphate. It functions in the pathway cofactor biosynthesis; molybdopterin biosynthesis. Functionally, catalyzes the conversion of (8S)-3',8-cyclo-7,8-dihydroguanosine 5'-triphosphate to cyclic pyranopterin monophosphate (cPMP). The chain is Cyclic pyranopterin monophosphate synthase from Stutzerimonas stutzeri (strain A1501) (Pseudomonas stutzeri).